Here is a 643-residue protein sequence, read N- to C-terminus: Immediate-early phosphoprotein 57 (643 aa).

2 disordered regions span residues 1–180 (MAQK…GGCA) and 194–329 (TGWG…QCPP). A compositionally biased stretch (acidic residues) spans 24–52 (LDFSESEEEEEEEESSSESESDEDSDMEV). Composition is skewed to low complexity over residues 57-71 (QEAGPPEQCQQQPQQ) and 83-100 (QQPQQREQGPPQQQQQQR). The span at 103-113 (KRGEESGDARP) shows a compositional bias: basic and acidic residues. Positions 162–171 (QQPQSQAAQP) are enriched in low complexity. The segment covering 215 to 241 (RRGDEDRRSGRDRRRREGRERDRESRS) has biased composition (basic and acidic residues). Positions 284–297 (AGPSQAQAAQAARA) are enriched in low complexity. The segment covering 298–307 (PRQEQGERRQ) has biased composition (basic and acidic residues). The span at 320-329 (QQCPPQQCPP) shows a compositional bias: pro residues.

It belongs to the herpesviridae UL69 family.

The polypeptide is Immediate-early phosphoprotein 57 (57) (Equus caballus (Horse)).